The following is a 376-amino-acid chain: tRNA 2-selenouridine synthase (376 aa).

In terms of domain architecture, Rhodanese spans 15-138; the sequence is FVAGKPLIDL…MRQYLIGVIE (124 aa). C98 serves as the catalytic S-selanylcysteine intermediate.

It belongs to the SelU family. As to quaternary structure, monomer.

It carries out the reaction 5-methylaminomethyl-2-thiouridine(34) in tRNA + selenophosphate + (2E)-geranyl diphosphate + H2O + H(+) = 5-methylaminomethyl-2-selenouridine(34) in tRNA + (2E)-thiogeraniol + phosphate + diphosphate. The enzyme catalyses 5-methylaminomethyl-2-thiouridine(34) in tRNA + (2E)-geranyl diphosphate = 5-methylaminomethyl-S-(2E)-geranyl-thiouridine(34) in tRNA + diphosphate. It catalyses the reaction 5-methylaminomethyl-S-(2E)-geranyl-thiouridine(34) in tRNA + selenophosphate + H(+) = 5-methylaminomethyl-2-(Se-phospho)selenouridine(34) in tRNA + (2E)-thiogeraniol. The catalysed reaction is 5-methylaminomethyl-2-(Se-phospho)selenouridine(34) in tRNA + H2O = 5-methylaminomethyl-2-selenouridine(34) in tRNA + phosphate. In terms of biological role, involved in the post-transcriptional modification of the uridine at the wobble position (U34) of tRNA(Lys), tRNA(Glu) and tRNA(Gln). Catalyzes the conversion of 2-thiouridine (S2U-RNA) to 2-selenouridine (Se2U-RNA). Acts in a two-step process involving geranylation of 2-thiouridine (S2U) to S-geranyl-2-thiouridine (geS2U) and subsequent selenation of the latter derivative to 2-selenouridine (Se2U) in the tRNA chain. In Shewanella oneidensis (strain ATCC 700550 / JCM 31522 / CIP 106686 / LMG 19005 / NCIMB 14063 / MR-1), this protein is tRNA 2-selenouridine synthase.